Consider the following 325-residue polypeptide: Protease HtpX homolog (325 aa).

Residues 20 to 40 (IGYLLGGGGGMMIALVIAVAM) traverse the membrane as a helical segment. His130 lines the Zn(2+) pocket. The active site involves Glu131. Zn(2+) is bound at residue His134. The next 2 helical transmembrane spans lie at 145-165 (IVAT…FLGG) and 173-193 (VMGV…AMIV). Glu202 is a Zn(2+) binding site. Residues 288-325 (AMTARAAAPSQNSGPWGQRSDNAGGNSNGGSRYRGPWS) are disordered. Over residues 306–325 (RSDNAGGNSNGGSRYRGPWS) the composition is skewed to low complexity.

It belongs to the peptidase M48B family. The cofactor is Zn(2+).

It is found in the cell inner membrane. In Brucella suis (strain ATCC 23445 / NCTC 10510), this protein is Protease HtpX homolog.